A 322-amino-acid polypeptide reads, in one-letter code: Methionyl-tRNA formyltransferase (322 aa).

113–116 (SLLP) contributes to the (6S)-5,6,7,8-tetrahydrofolate binding site.

It belongs to the Fmt family.

It catalyses the reaction L-methionyl-tRNA(fMet) + (6R)-10-formyltetrahydrofolate = N-formyl-L-methionyl-tRNA(fMet) + (6S)-5,6,7,8-tetrahydrofolate + H(+). In terms of biological role, attaches a formyl group to the free amino group of methionyl-tRNA(fMet). The formyl group appears to play a dual role in the initiator identity of N-formylmethionyl-tRNA by promoting its recognition by IF2 and preventing the misappropriation of this tRNA by the elongation apparatus. The polypeptide is Methionyl-tRNA formyltransferase (Blochmanniella pennsylvanica (strain BPEN)).